The sequence spans 88 residues: Sigma-conotoxin GVIIIA (88 aa).

The signal sequence occupies residues 1-20; that stretch reads MMSKMGAMFVLLLLFTLASS. Residues 21-46 constitute a propeptide that is removed on maturation; that stretch reads LQEGDVQARKTRLKSDFYRALARDDR. Pro-55 bears the 4-hydroxyproline mark. Trp-80 carries the 6'-bromotryptophan modification. Position 87 is a serine amide (Ser-87).

Belongs to the conotoxin S superfamily. In terms of processing, contains 5 disulfide bonds. Expressed by the venom duct.

The protein localises to the secreted. In terms of biological role, sigma-conotoxins bind and inhibit serotonin-gated ion channels. This peptide selectively and reversibly inhibits 5-hydroxytryptamine 3 receptor (HTR3A) through competitive antagonism (IC(50)=53-86.8 nM). The chain is Sigma-conotoxin GVIIIA from Conus geographus (Geography cone).